A 385-amino-acid chain; its full sequence is S-adenosylmethionine synthase (385 aa).

Residue H15 participates in ATP binding. D17 contacts Mg(2+). Position 43 (E43) interacts with K(+). L-methionine is bound by residues E56 and Q99. The interval 99–109 (QSVDIAQGVDR) is flexible loop. Residues 164–166 (DAK), 230–231 (RF), D239, 245–246 (RK), and K266 contribute to the ATP site. D239 is an L-methionine binding site. K270 is an L-methionine binding site.

It belongs to the AdoMet synthase family. In terms of assembly, homotetramer; dimer of dimers. Requires Mg(2+) as cofactor. K(+) is required as a cofactor.

The protein localises to the cytoplasm. It carries out the reaction L-methionine + ATP + H2O = S-adenosyl-L-methionine + phosphate + diphosphate. The protein operates within amino-acid biosynthesis; S-adenosyl-L-methionine biosynthesis; S-adenosyl-L-methionine from L-methionine: step 1/1. In terms of biological role, catalyzes the formation of S-adenosylmethionine (AdoMet) from methionine and ATP. The overall synthetic reaction is composed of two sequential steps, AdoMet formation and the subsequent tripolyphosphate hydrolysis which occurs prior to release of AdoMet from the enzyme. In Alkalilimnicola ehrlichii (strain ATCC BAA-1101 / DSM 17681 / MLHE-1), this protein is S-adenosylmethionine synthase.